Consider the following 721-residue polypeptide: Pentatricopeptide repeat-containing protein At3g49710 (721 aa).

PPR repeat units follow at residues 42–72 (STYL…TEEP), 73–103 (NVFS…IPQP), 104–138 (DTVS…GFEV), 139–169 (DGFT…SGGF), 172–202 (YSSV…MDEL), 204–238 (DEVS…GFKI), 239–273 (DMFT…GFHQ), 274–307 (NSHV…ILSP), 308–343 (DLVV…GHRP), 344–378 (DDCS…HIPS), 380–410 (RISV…MPEL), 411–445 (NAVS…GIAP), 446–476 (NKIT…MKET), and 482–512 (EAEH…MPYK). The segment at 517–592 (AWAALLGACR…KPGCSWIEVK (76 aa)) is type E motif. The segment at 593–623 (KKKHVFVAEDWSHPMIREVNEYLEEMMKKMK) is type E(+) motif. The tract at residues 624–721 (KVGYVMDKKW…DGKCSCGDYW (98 aa)) is type DYW motif.

This sequence belongs to the PPR family. PCMP-H subfamily.

This chain is Pentatricopeptide repeat-containing protein At3g49710 (PCMP-H79), found in Arabidopsis thaliana (Mouse-ear cress).